We begin with the raw amino-acid sequence, 382 residues long: Mannitol-1-phosphate 5-dehydrogenase (382 aa).

NAD(+) is bound at residue 3-14; sequence ALHFGAGNIGRG.

It belongs to the mannitol dehydrogenase family.

It carries out the reaction D-mannitol 1-phosphate + NAD(+) = beta-D-fructose 6-phosphate + NADH + H(+). In Pectobacterium atrosepticum (strain SCRI 1043 / ATCC BAA-672) (Erwinia carotovora subsp. atroseptica), this protein is Mannitol-1-phosphate 5-dehydrogenase.